A 285-amino-acid chain; its full sequence is Pantothenate synthetase (285 aa).

30–37 contributes to the ATP binding site; the sequence is MGNLHDGH. The active-site Proton donor is the His37. Gln61 contributes to the (R)-pantoate binding site. Position 61 (Gln61) interacts with beta-alanine. 148 to 151 is a binding site for ATP; the sequence is GEKD. Residue Gln154 coordinates (R)-pantoate. 185-188 provides a ligand contact to ATP; it reads RSSR.

Belongs to the pantothenate synthetase family. Homodimer.

It is found in the cytoplasm. It carries out the reaction (R)-pantoate + beta-alanine + ATP = (R)-pantothenate + AMP + diphosphate + H(+). The protein operates within cofactor biosynthesis; (R)-pantothenate biosynthesis; (R)-pantothenate from (R)-pantoate and beta-alanine: step 1/1. In terms of biological role, catalyzes the condensation of pantoate with beta-alanine in an ATP-dependent reaction via a pantoyl-adenylate intermediate. The sequence is that of Pantothenate synthetase from Alcanivorax borkumensis (strain ATCC 700651 / DSM 11573 / NCIMB 13689 / SK2).